The chain runs to 470 residues: MNNSITLTLKNYLGRMPTVNEYYMLKSQVRNIQKIMFFNKDIFISLIKKNKKKFFYEIKSSPSEMRLHILEYFMKQQKTSSIGKLYAIIELQTILVSTYTDVLGVLTTKAPYVFPSNVRYEPRSMKKIAHDILTTINVATVSEKVMGRHNVSELVTNVNLLMEEYLRRHNKSCICYGSYSLYLLNPSIEYGDIDIMQTNSRIFLINLAFLIKFITGHNVMLLKVPYLKNYMVLRDDEDKHIIDSFNVRQDTMHSIPKILIDNIYIVDPTFQLLSMIKMFSQVDRLEDLARNQEKATIKLATLLEYVRVKHGIIFNGKVTNMPMPSSFDHEKRIITVDTSRYNFSFKKCFVYLDENSLSSDILNLNADDAIDFENVSNSVFLINDEIMYTYFSNTILMSSKDEIHEISARGVSAHILMYQILTDGDYLIPLSDIVNSLMFKEKIPIFSIIPRDKKTGKHGIINIEKDIITH.

Catalysis depends on residues D192 and D194.

This sequence belongs to the poxviridae poly(A) polymerase catalytic subunit family. As to quaternary structure, heterodimer of a large (catalytic) subunit and a small (regulatory) subunit.

It carries out the reaction RNA(n) + ATP = RNA(n)-3'-adenine ribonucleotide + diphosphate. Polymerase that creates the 3'-poly(A) tail of mRNA's. The polypeptide is Poly(A) polymerase catalytic subunit (PAPL) (Erythrocebus patas (Red guenon)).